The following is a 178-amino-acid chain: Ras-like protein (178 aa).

A GTP-binding site is contributed by 1–6 (GGVGKS). Residues 21 to 29 (YDPTIEDSY) carry the Effector region motif. GTP is bound by residues 46–50 (DTAGQ) and 105–108 (NKCD). Cys-175 bears the Cysteine methyl ester mark. Cys-175 carries S-geranylgeranyl cysteine lipidation. A propeptide spans 176 to 178 (SIL) (removed in mature form).

This sequence belongs to the small GTPase superfamily. Ras family.

Its subcellular location is the cell membrane. The enzyme catalyses GTP + H2O = GDP + phosphate + H(+). Its activity is regulated as follows. Alternates between an inactive form bound to GDP and an active form bound to GTP. Activated by a guanine nucleotide-exchange factor (GEF) and inactivated by a GTPase-activating protein (GAP). Its function is as follows. Ras proteins bind GDP/GTP and possess intrinsic GTPase activity. This is Ras-like protein from Artemia salina (Brine shrimp).